The chain runs to 168 residues: ATP synthase subunit b (168 aa).

A helical membrane pass occupies residues 9 to 29 (AIPFGTIAYTLVVFLILLVML).

It belongs to the ATPase B chain family. As to quaternary structure, F-type ATPases have 2 components, F(1) - the catalytic core - and F(0) - the membrane proton channel. F(1) has five subunits: alpha(3), beta(3), gamma(1), delta(1), epsilon(1). F(0) has three main subunits: a(1), b(2) and c(10-14). The alpha and beta chains form an alternating ring which encloses part of the gamma chain. F(1) is attached to F(0) by a central stalk formed by the gamma and epsilon chains, while a peripheral stalk is formed by the delta and b chains.

It is found in the cell membrane. In terms of biological role, f(1)F(0) ATP synthase produces ATP from ADP in the presence of a proton or sodium gradient. F-type ATPases consist of two structural domains, F(1) containing the extramembraneous catalytic core and F(0) containing the membrane proton channel, linked together by a central stalk and a peripheral stalk. During catalysis, ATP synthesis in the catalytic domain of F(1) is coupled via a rotary mechanism of the central stalk subunits to proton translocation. Its function is as follows. Component of the F(0) channel, it forms part of the peripheral stalk, linking F(1) to F(0). This Bacillus cytotoxicus (strain DSM 22905 / CIP 110041 / 391-98 / NVH 391-98) protein is ATP synthase subunit b.